Consider the following 230-residue polypeptide: MLSSYRHQKKYKKNKAREIGPQLPLWAWKETAFSINQEPYWYSTIRLQGLMWNKRGHKLMFVKENQGYEYWETSGKQWKMEVRRDLDLIAQINFRNAWQYKSQGEWKTIGVWYESPGDYKGKENQFWFHWRIALCSCNKTGWDIREFMIGKHRWDLCKSCIQGEIVKNTNPRSLQRLALLHLAKDHVFQVMPLWRARRVTVQKFSWCRSPMGYTIPWSLQECWEMESIFE.

It belongs to the ovine/caprine lentivirus group Vif protein family.

The protein localises to the host cytoplasm. The protein resides in the virion. The chain is Virion infectivity factor (vif) from Ovis aries (Sheep).